The sequence spans 173 residues: Shikimate kinase (173 aa).

Residue 14-19 coordinates ATP; it reads GAGKST. Ser18 lines the Mg(2+) pocket. The substrate site is built by Asp36, Arg60, and Gly82. Arg120 provides a ligand contact to ATP. Arg140 is a substrate binding site. Gln157 is an ATP binding site.

This sequence belongs to the shikimate kinase family. Monomer. Mg(2+) is required as a cofactor.

It is found in the cytoplasm. It carries out the reaction shikimate + ATP = 3-phosphoshikimate + ADP + H(+). It functions in the pathway metabolic intermediate biosynthesis; chorismate biosynthesis; chorismate from D-erythrose 4-phosphate and phosphoenolpyruvate: step 5/7. Its function is as follows. Catalyzes the specific phosphorylation of the 3-hydroxyl group of shikimic acid using ATP as a cosubstrate. The chain is Shikimate kinase from Baumannia cicadellinicola subsp. Homalodisca coagulata.